Here is a 360-residue protein sequence, read N- to C-terminus: Malonyl CoA-acyl carrier protein transacylase, mitochondrial (360 aa).

Residues 1–24 (MKLLTFPGQGTSISISILKAIIRN) constitute a mitochondrion transit peptide. Catalysis depends on residues Ser-105 and His-235.

The protein belongs to the FabD family.

The protein localises to the mitochondrion. The catalysed reaction is holo-[ACP] + malonyl-CoA = malonyl-[ACP] + CoA. It functions in the pathway lipid metabolism; fatty acid biosynthesis. Its function is as follows. Involved in biosynthesis of fatty acids in mitochondria. The chain is Malonyl CoA-acyl carrier protein transacylase, mitochondrial (MCT1) from Saccharomyces cerevisiae (strain ATCC 204508 / S288c) (Baker's yeast).